The primary structure comprises 436 residues: 3-ketoacyl-CoA thiolase (436 aa).

Catalysis depends on C99, which acts as the Acyl-thioester intermediate. Active-site proton acceptor residues include H392 and C422.

It belongs to the thiolase-like superfamily. Thiolase family. As to quaternary structure, heterotetramer of two alpha chains (FadJ) and two beta chains (FadI).

Its subcellular location is the cytoplasm. The catalysed reaction is an acyl-CoA + acetyl-CoA = a 3-oxoacyl-CoA + CoA. It participates in lipid metabolism; fatty acid beta-oxidation. Catalyzes the final step of fatty acid oxidation in which acetyl-CoA is released and the CoA ester of a fatty acid two carbons shorter is formed. The sequence is that of 3-ketoacyl-CoA thiolase from Escherichia coli (strain 55989 / EAEC).